Reading from the N-terminus, the 693-residue chain is Sodium-dependent phosphate transport protein 2B (693 aa).

Residues 1–46 (MAPWPELENSQPTSEKYTVKADGEQSAKPEKAKETEKDDTGTPITK) form a disordered region. Topologically, residues 1–89 (MAPWPELENS…KWSERDTKGK (89 aa)) are cytoplasmic. The segment covering 17–40 (YTVKADGEQSAKPEKAKETEKDDT) has biased composition (basic and acidic residues). Residues 90–110 (ILCVFQGIGKFILLLVFLYFF) traverse the membrane as a helical segment. Residues 111 to 135 (VCSLDVLSSAFQLVGGKVAGKFFNN) lie on the Extracellular side of the membrane. The helical transmembrane segment at 136-156 (NSIMSNPLAGMVIGVLVTVLV) threads the bilayer. At 157 to 212 (QSSSTSTSIVVSMVASSLLPVHAAIPIIMGANIGTSITNTIVALMQAGDRKEFRRA) the chain is on the cytoplasmic side. Residues 213 to 233 (FAGATVHDFFNWLSVLVLLPL) form a helical membrane-spanning segment. The Extracellular portion of the chain corresponds to 234–361 (EAATGYLERL…IFVNFNLSDA (128 aa)). Cysteines 302 and 349 form a disulfide. N-linked (GlcNAc...) asparagine glycans are attached at residues N307 and N320. The helical transmembrane segment at 362–382 (IVGTILLITSLLILCTCLILI) threads the bilayer. Residues 383–408 (VKLLGSVLRGQVAAVIKKTINTDFPY) lie on the Cytoplasmic side of the membrane. Residues 409-429 (PFSWVTGYLAILVGAGMTFIV) form a helical membrane-spanning segment. The Extracellular segment spans residues 430–485 (QSSSVFTSAMTPLIGIGVISIQRAYPLTLGANIGTTTTAILAALASPGSTLKSSLQ). A helical transmembrane segment spans residues 486–506 (IALCHFFFNISGIILWYPIPF). At 507-525 (TRLPIRLAKGLGNISSKYR) the chain is on the cytoplasmic side. The helical transmembrane segment at 526–546 (WFAIVYLIVFFLLIPLAVFGL) threads the bilayer. Over 547-550 (SLIG) the chain is Extracellular. A helical membrane pass occupies residues 551 to 571 (WPVLVGVASPIVLVILLVVVL). The Cytoplasmic portion of the chain corresponds to 572 to 693 (KILQSFCPGS…TKIVSSVTAL (122 aa)).

Belongs to the SLC34A transporter family. In terms of processing, glycosylated.

The protein resides in the apical cell membrane. It carries out the reaction 3 Na(+)(out) + phosphate(out) = 3 Na(+)(in) + phosphate(in). Functionally, involved in actively transporting phosphate into cells via Na(+) cotransport. In Bos taurus (Bovine), this protein is Sodium-dependent phosphate transport protein 2B (SLC34A2).